Reading from the N-terminus, the 107-residue chain is MENAIRNAFTMKVKSGFETEYKIRHDQIWPELTALLSESGICDYSIFLDEETGILFGVQKLSSGFDRSQLSSHPLMRKWWNHMSDIMETNPDNSPKTNSLKEVFHLD.

Tyr21 is a binding site for substrate. Catalysis depends on His25, which acts as the Proton donor. Substrate is bound by residues Tyr44 and 79 to 80; that span reads WW. The interval 88–107 is disordered; sequence ETNPDNSPKTNSLKEVFHLD. The segment covering 90-100 has biased composition (polar residues); that stretch reads NPDNSPKTNSL.

It belongs to the rhamnose mutarotase family. As to quaternary structure, homodimer.

Its subcellular location is the cytoplasm. It catalyses the reaction alpha-L-rhamnose = beta-L-rhamnose. The protein operates within carbohydrate metabolism; L-rhamnose metabolism. Functionally, involved in the anomeric conversion of L-rhamnose. The protein is L-rhamnose mutarotase of Flavobacterium johnsoniae (strain ATCC 17061 / DSM 2064 / JCM 8514 / BCRC 14874 / CCUG 350202 / NBRC 14942 / NCIMB 11054 / UW101) (Cytophaga johnsonae).